A 249-amino-acid polypeptide reads, in one-letter code: Type III pantothenate kinase (249 aa).

6-13 (DAGNSRIK) lines the ATP pocket. Residues phenylalanine 77 and 98–101 (GVDR) contribute to the substrate site. Aspartate 100 functions as the Proton acceptor in the catalytic mechanism. Residue aspartate 121 coordinates K(+). ATP is bound at residue serine 124. Threonine 177 contacts substrate.

The protein belongs to the type III pantothenate kinase family. As to quaternary structure, homodimer. NH4(+) is required as a cofactor. K(+) serves as cofactor.

It is found in the cytoplasm. The catalysed reaction is (R)-pantothenate + ATP = (R)-4'-phosphopantothenate + ADP + H(+). It participates in cofactor biosynthesis; coenzyme A biosynthesis; CoA from (R)-pantothenate: step 1/5. In terms of biological role, catalyzes the phosphorylation of pantothenate (Pan), the first step in CoA biosynthesis. This Teredinibacter turnerae (strain ATCC 39867 / T7901) protein is Type III pantothenate kinase.